We begin with the raw amino-acid sequence, 289 residues long: Golgi to ER traffic protein 2 (289 aa).

Over residues 1–10 the composition is skewed to basic and acidic residues; that stretch reads MSEVSEAEKR. The segment at 1 to 68 is disordered; that stretch reads MSEVSEAEKR…LQRGSNSGQS (68 aa). Over 1–153 the chain is Cytoplasmic; sequence MSEVSEAEKR…VGVHQFQVRQ (153 aa). The segment covering 11-21 has biased composition (basic residues); it reads RILREKRKQKF. A compositionally biased stretch (polar residues) spans 33–68; that stretch reads ITTQQPGGASGDSTVTSAEISDNEGSLQRGSNSGQS. The helical transmembrane segment at 154-173 threads the bilayer; that stretch reads LKAYMLLLRWAILLPFIYYV. Residues 174 to 196 lie on the Lumenal side of the membrane; the sequence is MHPGTAHWLHTSRFLHFVMEPRN. Residues 197 to 216 form a helical membrane-spanning segment; it reads FFMVFTTFEVASISIYYQVL. The Cytoplasmic portion of the chain corresponds to 217 to 263; sequence LTLERTNKVNSLSYSSKLVTWAGLVPDGMLPIDNLQGKVVVALHYWD. Residues 264 to 284 form a helical membrane-spanning segment; that stretch reads ILSMYLTDLSLCLVAAGLMKY. At 285 to 289 the chain is on the lumenal side; that stretch reads YHAAP.

It belongs to the GET2 family. In terms of assembly, component of the Golgi to ER traffic (GET) complex, which is composed of GET1, GET2 and GET3. Within the complex, GET1 and GET2 form a heterotetramer which is stabilized by phosphatidylinositol binding and which binds to the GET3 homodimer.

Its subcellular location is the endoplasmic reticulum membrane. The protein resides in the golgi apparatus membrane. Functionally, required for the post-translational delivery of tail-anchored (TA) proteins to the endoplasmic reticulum. Together with GET1, acts as a membrane receptor for soluble GET3, which recognizes and selectively binds the transmembrane domain of TA proteins in the cytosol. The GET complex cooperates with the HDEL receptor ERD2 to mediate the ATP-dependent retrieval of resident ER proteins that contain a C-terminal H-D-E-L retention signal from the Golgi to the ER. This Eremothecium gossypii (strain ATCC 10895 / CBS 109.51 / FGSC 9923 / NRRL Y-1056) (Yeast) protein is Golgi to ER traffic protein 2.